Here is a 707-residue protein sequence, read N- to C-terminus: Keratin, type II cytoskeletal 2 epidermal (707 aa).

The tract at residues 1–20 (MSCQISCRSRRGGGGGGGGG) is disordered. A head region spans residues 1–198 (MSCQISCRSR…DPEIQNVKSQ (198 aa)). R22 carries the post-translational modification Asymmetric dimethylarginine. 2 positions are modified to phosphoserine: S25 and S28. The segment covering 29–38 (AVVSGGSRRS) has biased composition (low complexity). Positions 29–59 (AVVSGGSRRSNTSFSCISRHGGGRGGSGGGG) are disordered. R52 bears the Omega-N-methylarginine mark. At S64 the chain carries Phosphoserine. Positions 199 to 234 (EREQIKTLNNKFASFIDKVRFLEQQNQVLRTKWELL) are coil 1A. Residues 199–512 (EREQIKTLNN…KLLEGEECRM (314 aa)) enclose the IF rod domain. The interval 235-253 (QQLDVGSRTTNLDPIFQAY) is linker 1. The interval 254–345 (IGMLKKQVDR…TLYDAELSQL (92 aa)) is coil 1B. The tract at residues 346-369 (QQDVTDTNVILSMDNNRNLDLDSI) is linker 12. Residues 370–508 (IAEVQNQYEM…ATYRKLLEGE (139 aa)) form a coil 2 region. Residues 509 to 707 (ECRMSGDFSD…CGSGVTFSFR (199 aa)) form a tail region. Residues 531–707 (SSVASKTGFG…CGSGVTFSFR (177 aa)) are disordered. The span at 539–700 (FGSGGQSSGG…GSGSGEGCGS (162 aa)) shows a compositional bias: gly residues. R555, R593, R607, and R675 each carry omega-N-methylarginine.

It belongs to the intermediate filament family. Heterotetramer of two type I and two type II keratins. Associates with KRT10. In terms of tissue distribution, expressed predominantly in the suprabasal layers of the plantar epidermis outside of the footpads (at protein level). Expressed in the suprabasal layers of the interfollicular epidermis of the ear, in the interscale regions distant from the hair follicles in the tail, and in the soles of the footpads (at protein level). Expressed mainly in the middle spinous and granular cells of the epidermis of adult tail, nipple and footsole skin. Also found in ear.

Its subcellular location is the cytoplasm. Functionally, probably contributes to terminal cornification. Associated with keratinocyte activation, proliferation and keratinization. Required for maintenance of corneocytes and keratin filaments in suprabasal keratinocytes in the epidermis of the ear, potentially via moderation of expression and localization of keratins and their partner proteins. Plays a role in the establishment of the epidermal barrier on plantar skin. The chain is Keratin, type II cytoskeletal 2 epidermal from Mus musculus (Mouse).